Consider the following 302-residue polypeptide: Ethylmalonyl-CoA decarboxylase (302 aa).

The protein belongs to the enoyl-CoA hydratase/isomerase family.

Its subcellular location is the cytoplasm. It localises to the cytosol. The catalysed reaction is (2S)-ethylmalonyl-CoA + H(+) = butanoyl-CoA + CO2. It carries out the reaction (S)-methylmalonyl-CoA + H(+) = propanoyl-CoA + CO2. The enzyme catalyses (2R)-ethylmalonyl-CoA + H(+) = butanoyl-CoA + CO2. Its function is as follows. Decarboxylates ethylmalonyl-CoA, a potentially toxic metabolite, to form butyryl-CoA, suggesting it might be involved in metabolite proofreading. Acts preferentially on (S)-ethylmalonyl-CoA but also has some activity on the (R)-isomer. Also has methylmalonyl-CoA decarboxylase activity at lower level. The polypeptide is Ethylmalonyl-CoA decarboxylase (echdc1) (Danio rerio (Zebrafish)).